The chain runs to 234 residues: 5'-methylthioadenosine/S-adenosylhomocysteine nucleosidase (234 aa).

Glutamate 12 serves as the catalytic Proton acceptor. Substrate is bound by residues glycine 78, isoleucine 152, and 173-174; that span reads ME. Catalysis depends on aspartate 197, which acts as the Proton donor.

It belongs to the PNP/UDP phosphorylase family. MtnN subfamily.

The enzyme catalyses S-adenosyl-L-homocysteine + H2O = S-(5-deoxy-D-ribos-5-yl)-L-homocysteine + adenine. It carries out the reaction S-methyl-5'-thioadenosine + H2O = 5-(methylsulfanyl)-D-ribose + adenine. It catalyses the reaction 5'-deoxyadenosine + H2O = 5-deoxy-D-ribose + adenine. Its pathway is amino-acid biosynthesis; L-methionine biosynthesis via salvage pathway; S-methyl-5-thio-alpha-D-ribose 1-phosphate from S-methyl-5'-thioadenosine (hydrolase route): step 1/2. Catalyzes the irreversible cleavage of the glycosidic bond in both 5'-methylthioadenosine (MTA) and S-adenosylhomocysteine (SAH/AdoHcy) to adenine and the corresponding thioribose, 5'-methylthioribose and S-ribosylhomocysteine, respectively. Also cleaves 5'-deoxyadenosine, a toxic by-product of radical S-adenosylmethionine (SAM) enzymes, into 5-deoxyribose and adenine. The sequence is that of 5'-methylthioadenosine/S-adenosylhomocysteine nucleosidase from Desulfotalea psychrophila (strain LSv54 / DSM 12343).